A 359-amino-acid polypeptide reads, in one-letter code: Outer membrane protein assembly factor BamC (359 aa).

A signal peptide spans 1–34; that stretch reads MASLFDKNSFQMTRLQKTAVAKVVGVSLIMLLAA. Residue Cys-35 is the site of N-palmitoyl cysteine attachment. Residue Cys-35 is the site of S-diacylglycerol cysteine attachment.

Belongs to the BamC family. In terms of assembly, part of the Bam complex, which is composed of the outer membrane protein BamA, and four lipoproteins BamB, BamC, BamD and BamE.

The protein localises to the cell outer membrane. In terms of biological role, part of the outer membrane protein assembly complex, which is involved in assembly and insertion of beta-barrel proteins into the outer membrane. The protein is Outer membrane protein assembly factor BamC of Rahnella sp. (strain Y9602).